The sequence spans 420 residues: Small ribosomal subunit protein mS75 (420 aa).

Residues 1 to 11 constitute a mitochondrion transit peptide; the sequence is MYNLSRIIYRF. Disordered regions lie at residues 99 to 120 and 390 to 420; these read RQKN…DVMS and RYSP…GKQT. The span at 102 to 114 shows a compositional bias: polar residues; the sequence is NAANPSSDNTPSD. The segment covering 396-409 has biased composition (basic residues); it reads QKRRSKRKQKRKER.

As to quaternary structure, component of the mitochondrial ribosome small subunit. In terms of tissue distribution, expressed at high levels in reproductive organs and, at lower levels, ubiquitously.

It localises to the mitochondrion. Essential for fertility (male and female gametophyte functions and development). Required for the integrity of female gametic mitochondria. Modulates male gametophyte functions, including pollen tube growth and style penetration. Involved in mitochondrial-driven cell-to-cell communication in embryo sacs during female gametes maturation (including embryogenesis initiation and endosperm development), especially for reciprocal signaling between central and egg cells which regulates reciprocal development. The protein is Small ribosomal subunit protein mS75 of Arabidopsis thaliana (Mouse-ear cress).